We begin with the raw amino-acid sequence, 353 residues long: Phosphate acyltransferase (353 aa).

Belongs to the PlsX family. Homodimer. Probably interacts with PlsY.

It localises to the cytoplasm. It catalyses the reaction a fatty acyl-[ACP] + phosphate = an acyl phosphate + holo-[ACP]. It functions in the pathway lipid metabolism; phospholipid metabolism. Functionally, catalyzes the reversible formation of acyl-phosphate (acyl-PO(4)) from acyl-[acyl-carrier-protein] (acyl-ACP). This enzyme utilizes acyl-ACP as fatty acyl donor, but not acyl-CoA. This is Phosphate acyltransferase from Rhodopseudomonas palustris (strain ATCC BAA-98 / CGA009).